The chain runs to 326 residues: Cyclin-dependent kinase 6 (326 aa).

M1 is modified (N-acetylmethionine). Residues Y13 and Y24 each carry the phosphotyrosine modification. Residues Y13 to F300 enclose the Protein kinase domain. Residues I19–V27 and K43 contribute to the ATP site. T49 and T70 each carry phosphothreonine. D145 serves as the catalytic Proton acceptor. Position 177 is a phosphothreonine (T177). The residue at position 264 (K264) is an N6-acetyllysine. Phosphothreonine is present on T325.

This sequence belongs to the protein kinase superfamily. CMGC Ser/Thr protein kinase family. CDC2/CDKX subfamily. Interaction with D-type G1 cyclins. Cyclin binding promotes enzyme activation by phosphorylation at Thr-177. Binds to RUNX1, CDKN2D, FBXO7 and CDKN2C/p18-INK4c. Forms a cytoplasmic complex with Hsp90/HSP90AB1 and CDC37. FBXO7-binding promotes D-type cyclin binding. Interacts with Kaposi's sarcoma herpesvirus (KSHV) V-cyclin and herpesvirus saimiri (V-cyclin/ECLF2); the CDK6/V-cyclin complex phosphorylates NPM1 and thus lead to viral reactivation by reducing viral LANA levels. Thr-177 phosphorylation and Tyr-24 dephosphorylation promotes kinase activity. As to expression, expressed ubiquitously. Accumulates in squamous cell carcinomas, proliferating hematopoietic progenitor cells, beta-cells of pancreatic islets of Langerhans, and neuroblastomas. Reduced levels in differentiating cells.

The protein localises to the cytoplasm. Its subcellular location is the nucleus. The protein resides in the cell projection. It localises to the ruffle. It is found in the cytoskeleton. The protein localises to the microtubule organizing center. Its subcellular location is the centrosome. The enzyme catalyses L-seryl-[protein] + ATP = O-phospho-L-seryl-[protein] + ADP + H(+). It carries out the reaction L-threonyl-[protein] + ATP = O-phospho-L-threonyl-[protein] + ADP + H(+). With respect to regulation, inhibited by INK4 proteins (CDKN2C/p18-INK4c), aminopurvalanol, PD0332991, 4-(Pyrazol-4-yl)-pyrimidines and fisetin, a flavonol inhibitor. Activated by Thr-177 phosphorylation and Tyr-24 dephosphorylation. Stimulated by cyclin from herpesvirus saimiri (V-cyclin/ECLF2). Rapidly down-regulated prior to cell differentiation (e.g. erythroid and osteoblast). Functionally, serine/threonine-protein kinase involved in the control of the cell cycle and differentiation; promotes G1/S transition. Phosphorylates pRB/RB1 and NPM1. Interacts with D-type G1 cyclins during interphase at G1 to form a pRB/RB1 kinase and controls the entrance into the cell cycle. Involved in initiation and maintenance of cell cycle exit during cell differentiation; prevents cell proliferation and negatively regulates cell differentiation, but is required for the proliferation of specific cell types (e.g. erythroid and hematopoietic cells). Essential for cell proliferation within the dentate gyrus of the hippocampus and the subventricular zone of the lateral ventricles. Required during thymocyte development. Promotes the production of newborn neurons, probably by modulating G1 length. Promotes, at least in astrocytes, changes in patterns of gene expression, changes in the actin cytoskeleton including loss of stress fibers, and enhanced motility during cell differentiation. Prevents myeloid differentiation by interfering with RUNX1 and reducing its transcription transactivation activity, but promotes proliferation of normal myeloid progenitors. Delays senescence. Promotes the proliferation of beta-cells in pancreatic islets of Langerhans. May play a role in the centrosome organization during the cell cycle phases. The polypeptide is Cyclin-dependent kinase 6 (CDK6) (Homo sapiens (Human)).